The chain runs to 459 residues: tRNA modification GTPase MnmE (459 aa).

(6S)-5-formyl-5,6,7,8-tetrahydrofolate-binding residues include Arg23, Glu86, and Arg125. Residues 221-380 form the TrmE-type G domain; sequence GLKTVIVGKP…LQDKIESMVY (160 aa). Asn231 is a binding site for K(+). GTP contacts are provided by residues 231–236, 250–256, and 275–278; these read NVGKSS, TDIPGTT, and DTAG. Ser235 serves as a coordination point for Mg(2+). Positions 250, 252, and 255 each coordinate K(+). Thr256 contacts Mg(2+). Lys459 contributes to the (6S)-5-formyl-5,6,7,8-tetrahydrofolate binding site.

This sequence belongs to the TRAFAC class TrmE-Era-EngA-EngB-Septin-like GTPase superfamily. TrmE GTPase family. In terms of assembly, homodimer. Heterotetramer of two MnmE and two MnmG subunits. The cofactor is K(+).

Its subcellular location is the cytoplasm. Exhibits a very high intrinsic GTPase hydrolysis rate. Involved in the addition of a carboxymethylaminomethyl (cmnm) group at the wobble position (U34) of certain tRNAs, forming tRNA-cmnm(5)s(2)U34. In Clostridioides difficile (strain 630) (Peptoclostridium difficile), this protein is tRNA modification GTPase MnmE.